The chain runs to 144 residues: MPRYREWDLACKVYVGNLGSSASKHEIEGAFAKYGPLRNVWVARNPPGFAFVEFEDRRDAEDATRALDGTRCCGTRIRVEMSSGRSRDRRRGEGGSSGRSGSGRYRITPSARTTSTATSSFYNINNLQQQPSSQPQPATFNLQL.

Residues 11–84 form the RRM domain; the sequence is CKVYVGNLGS…TRIRVEMSSG (74 aa). A disordered region spans residues 78-115; the sequence is RVEMSSGRSRDRRRGEGGSSGRSGSGRYRITPSARTTS.

It belongs to the splicing factor SR family. As to quaternary structure, interacts with x16 (via Arg/Ser-rich region). Post-translationally, extensively phosphorylated on serine residues in the RS domain. The tandem heptapeptide repeats in the C-terminal domain (CTD) can be highly phosphorylated. The phosphorylation activates Pol II. Phosphorylation occurs at residues 'Ser-2', 'Ser-5' and 'Ser-7' of the heptapeptide repeat and is mediated by P-TEFb. Dephosphorylated by the INTAC complex when transcripts are unfavorably configured for transcriptional elongation, leading to premature transcription termination: dephosphorylation is mediated by the mts/PP2A component of the INTAC complex. As to expression, ubiquitous.

The protein resides in the nucleus. In terms of biological role, contributes to the activation of female-specific DSX splicing in vivo by recognizing the RBP1 target sequences within the purine-rich polypyrimidine tract of the female-specific 3' splice site. The polypeptide is RNA-binding protein 1 (Rbp1) (Drosophila melanogaster (Fruit fly)).